Here is a 1412-residue protein sequence, read N- to C-terminus: Erbin (1412 aa).

17 LRR repeats span residues 23 to 44 (TVTTLDYSHCSLEQVPKEIFTF), 47 to 68 (TLEELYLDANQIEELPKQLFNC), 70 to 91 (SLHKLSLPDNDLTTLPASIANL), 93 to 114 (NLRELDVSKNGIQEFPENIKNC), 116 to 137 (VLTIVEASVNPISKLPDGFSQL), 139 to 161 (NLTQLYLNDAFLEFLPANFGRLT), 162 to 183 (KLQILELRENQLKMLPKTMNRL), 185 to 206 (QLERLDLGSNEFTEVPEVLEQL), 208 to 229 (GLKEFWMDANRLTFIPGFIGSL), 231 to 252 (QLTYLDVSKNNIEMVEEGISTC), 254 to 275 (NLQDLLLSSNSLQQLPETIGSL), 277 to 298 (NITTLKIDENQLMYLPDSIGGL), 300 to 321 (SVEELDCSFNEVEALPSSIGQL), 323 to 344 (NLRTFAADHNYLQQLPPEIGSW), 346 to 367 (NITVLFLHSNKLETLPEEMGDM), 369 to 391 (KLKVINLSDNRLKNLPFSFTKLQ), and 392 to 413 (QLTAMWLSDNQSKPLIPLQKET). Residues serine 440 and serine 444 each carry the phosphoserine modification. 2 disordered regions span residues 464-489 (CDEDKDEREAPPREGNLKRYPTPYPD) and 506-542 (KDEETNEDSGRDLKPHEDQQDINKDVGVKTSESTTTV). A compositionally biased stretch (basic and acidic residues) spans 470–480 (EREAPPREGNL). Tyrosine 483 bears the Phosphotyrosine mark. Phosphothreonine is present on threonine 485. A compositionally biased stretch (basic and acidic residues) spans 506–532 (KDEETNEDSGRDLKPHEDQQDINKDVG). A compositionally biased stretch (low complexity) spans 533–542 (VKTSESTTTV). Serine 569, serine 598, serine 602, serine 603, and serine 620 each carry phosphoserine. Residues 615–681 (PLIETSINQP…TDSSQDTSLC (67 aa)) are disordered. Positions 632–641 (NKKDDTKETD) are enriched in basic and acidic residues. The span at 650 to 662 (NSNQNNSNCSSPS) shows a compositional bias: low complexity. Residues 663 to 681 (RMSDSVSLNTDSSQDTSLC) show a composition bias toward polar residues. Residue serine 715 is modified to Phosphoserine. Residues 803 to 867 (ETEHLENGNK…PQKSGPVGSV (65 aa)) are disordered. The span at 817 to 835 (ESVNKVNGHSEETSQSPNR) shows a compositional bias: polar residues. Phosphoserine occurs at positions 852, 857, and 872. Residue threonine 917 is modified to Phosphothreonine. Tyrosine 920 is modified (phosphotyrosine). Position 931 is a phosphoserine (serine 931). Tyrosine 972 is subject to Phosphotyrosine. 2 disordered regions span residues 997–1021 (NPQIDHASFPPQLLPRSESTENQSY) and 1075–1192 (QRQS…KSKV). Positions 1075–1086 (QRQSSVSSTASV) are enriched in polar residues. Tyrosine 1104 is subject to Phosphotyrosine. Positions 1157–1171 (MSVSDFNYSRTSPSK) are enriched in polar residues. A phosphoserine mark is found at serine 1158, serine 1179, and serine 1286. The region spanning 1321-1410 (EIRVRVEKDP…TVELIIVREV (90 aa)) is the PDZ domain.

It belongs to the LAP (LRR and PDZ) protein family. Interacts with ERBB2, BPAG1 and ITGB4. May favor the localization of ERBB2, by restricting its presence to the basolateral membrane of epithelial cells. Also found to interact with ARVCF and delta catenin. Interacts (via C-terminus) with DST Isoform 3 (via N-terminus). Interacts with NOD2 (via CARD domain). Highly expressed in brain, heart, kidney, muscle and stomach, followed by liver, spleen and intestine.

The protein resides in the cell junction. The protein localises to the hemidesmosome. It localises to the nucleus membrane. Its subcellular location is the basolateral cell membrane. Functionally, acts as an adapter for the receptor ERBB2, in epithelia. By binding the unphosphorylated 'Tyr-1248' of receptor ERBB2, it may contribute to stabilize this unphosphorylated state. Inhibits NOD2-dependent NF-kappa-B signaling and pro-inflammatory cytokine secretion. The protein is Erbin of Homo sapiens (Human).